The following is a 637-amino-acid chain: Choline O-acetyltransferase (637 aa).

Residues 1-13 are compositionally biased toward basic and acidic residues; the sequence is MPVSKREQSKDTG. The segment at 1 to 20 is disordered; it reads MPVSKREQSKDTGDPCALPK. The Proton acceptor role is filled by His-329. CoA is bound by residues 407–419, Ser-445, and Gln-545; that span reads GKEFIKRQKMSPD.

It belongs to the carnitine/choline acetyltransferase family.

The catalysed reaction is choline + acetyl-CoA = acetylcholine + CoA. Its function is as follows. Catalyzes the reversible synthesis of acetylcholine (ACh) from acetyl CoA and choline at cholinergic synapses. The protein is Choline O-acetyltransferase (chat) of Danio rerio (Zebrafish).